The primary structure comprises 307 residues: MNVGRKLKTLMFLSGTLTIIAEGIITYLIVSIIGIPTIFTAIFLVILWLIQWLIAPYLVGRNTEEVGPGDPLYEIVRKIAMESKVPTPRVFISYEEYPNAFAFGNYITGKRVAVTKPLLDILNQDELEAVLAHEVGHIKHLDVEIGMALGLIPTIIGYVGNFLLFTGWTLLFFAGDEVELILGLAMLAIGGVLFVLTFLLQIFVLWFNRLRESFADFHSATLYKDKAPYLATALAKIQIYAQNIRTDPFTGIIITAPPIKLKENERDAEELVMKWLHEHISPFADILMTHPHPAKRVKMLYSILQGT.

The next 2 membrane-spanning stretches (helical) occupy residues 7-27 (LKTL…IITY) and 38-60 (IFTA…YLVG). His133 serves as a coordination point for Zn(2+). Glu134 is a catalytic residue. His137 is a Zn(2+) binding site. 2 helical membrane passes run 145–165 (IGMA…FLLF) and 180–200 (LILG…TFLL). Residue Glu212 coordinates Zn(2+).

This sequence belongs to the peptidase M48B family. It depends on Zn(2+) as a cofactor.

The protein resides in the cell membrane. In Sulfolobus acidocaldarius (strain ATCC 33909 / DSM 639 / JCM 8929 / NBRC 15157 / NCIMB 11770), this protein is Protease HtpX homolog 1.